We begin with the raw amino-acid sequence, 316 residues long: Ornithine carbamoyltransferase (316 aa).

Residues 59–62 (STRT), Q86, R110, and 137–140 (HPCQ) each bind carbamoyl phosphate. L-ornithine-binding positions include N168, D232, and 236–237 (SM). Residues 273 to 274 (CL) and R301 each bind carbamoyl phosphate.

Belongs to the aspartate/ornithine carbamoyltransferase superfamily. OTCase family.

It is found in the cytoplasm. It carries out the reaction carbamoyl phosphate + L-ornithine = L-citrulline + phosphate + H(+). It participates in amino-acid degradation; L-arginine degradation via ADI pathway; carbamoyl phosphate from L-arginine: step 2/2. Functionally, reversibly catalyzes the transfer of the carbamoyl group from carbamoyl phosphate (CP) to the N(epsilon) atom of ornithine (ORN) to produce L-citrulline. This Listeria monocytogenes serotype 4a (strain HCC23) protein is Ornithine carbamoyltransferase.